A 417-amino-acid chain; its full sequence is RH-like protein IIF (417 aa).

The next 11 membrane-spanning stretches (helical) occupy residues 12-32, 44-64, 77-97, 125-145, 172-192, 203-223, 238-258, 265-285, 287-307, 331-351, and 358-378; these read CLPL…YFFT, LVAS…GFGF, VAFN…LDGF, ISAG…MVLV, FYLF…KPLP, TIPS…WPSF, VFNT…GSSL, ISMT…GTSC, LIPS…ISIG, NFSL…VRHT, and MIGF…AIAL.

Belongs to the ammonium transporter (TC 2.A.49) family. Rh subfamily.

Its subcellular location is the membrane. In terms of biological role, may be part of an oligomeric complex which is likely to have a transport or channel function in the erythrocyte membrane. This is RH-like protein IIF from Pan troglodytes (Chimpanzee).